Here is a 119-residue protein sequence, read N- to C-terminus: MPTSSNDLYQTRLDVQTPNRWFLYISLELFNNMYSPFRSSSVLLSGAQSDIPKVGKCLFLPCRSLEFRASANSLSVHFLLNVISAILSMLIERYAVEVIMSKITWPRSNEDWRFHGIKG.

A helical transmembrane segment spans residues 74–91 (LSVHFLLNVISAILSMLI).

It is found in the membrane. This is an uncharacterized protein from Schizosaccharomyces pombe (strain 972 / ATCC 24843) (Fission yeast).